The chain runs to 294 residues: 4-hydroxy-tetrahydrodipicolinate synthase (294 aa).

T44 contributes to the pyruvate binding site. The active-site Proton donor/acceptor is the Y132. Catalysis depends on K161, which acts as the Schiff-base intermediate with substrate. I206 serves as a coordination point for pyruvate.

This sequence belongs to the DapA family. As to quaternary structure, homotetramer; dimer of dimers.

The protein resides in the cytoplasm. It carries out the reaction L-aspartate 4-semialdehyde + pyruvate = (2S,4S)-4-hydroxy-2,3,4,5-tetrahydrodipicolinate + H2O + H(+). The protein operates within amino-acid biosynthesis; L-lysine biosynthesis via DAP pathway; (S)-tetrahydrodipicolinate from L-aspartate: step 3/4. Catalyzes the condensation of (S)-aspartate-beta-semialdehyde [(S)-ASA] and pyruvate to 4-hydroxy-tetrahydrodipicolinate (HTPA). The chain is 4-hydroxy-tetrahydrodipicolinate synthase from Thermotoga neapolitana (strain ATCC 49049 / DSM 4359 / NBRC 107923 / NS-E).